The chain runs to 260 residues: Alpha carbonic anhydrase 6 (260 aa).

Residues 1-28 (MDANTKTILFFVVFFIDLFSPNILFVYA) form the signal peptide. The Alpha-carbonic anhydrase domain occupies 35–260 (PLFTYKQKTE…FVFVFWCMLM (226 aa)). The cysteines at positions 60 and 215 are disulfide-linked. H100 serves as the catalytic Proton acceptor. Zn(2+) contacts are provided by H126 and H128. N-linked (GlcNAc...) asparagine glycosylation occurs at N136. Zn(2+) is bound at residue H145. 211–212 (TI) is a substrate binding site.

Belongs to the alpha-class carbonic anhydrase family. The cofactor is Zn(2+). N-glycosylated.

Its subcellular location is the plastid. It localises to the chloroplast stroma. The enzyme catalyses hydrogencarbonate + H(+) = CO2 + H2O. Functionally, reversible hydration of carbon dioxide. In Arabidopsis thaliana (Mouse-ear cress), this protein is Alpha carbonic anhydrase 6 (ACA6).